The primary structure comprises 302 residues: Dioxygenase ALT11 (302 aa).

Positions 1-22 are disordered; sequence MSSPELPSQMGVPNGHTKLQEV. The Fe cation site is built by histidine 147, aspartate 149, and histidine 223.

Belongs to the PhyH family. Homodimer. Requires Fe cation as cofactor.

It functions in the pathway mycotoxin biosynthesis. In terms of biological role, dioxygenase; part of the gene cluster that mediates the biosynthesis of the host-selective toxins (HSTs) AAL-toxins, sphinganine-analog mycotoxins responsible for Alternaria stem canker on tomato by the tomato pathotype. The biosynthesis starts with the polyketide synthase ALT1-catalyzed C-16 carbon chain assembly from one starter acetyl-CoA unit with malonyl-CoA extender units. ALT1 also selectively transfers methyl groups at the first and the third cycle of chain elongation for AAL toxin. The C-16 polyketide chain is released from the enzyme by a nucleophilic attack of a carbanion, which is derived from R-carbon of glycin by decarboxylation, on the carbonyl carbon of polyketide acyl chain. This step is probably catalyzed by a pyridoxal 5'-phosphate-dependent aminoacyl transferase ALT4. The respective functions of the other enzymes encoded by the cluster have still to be elucidated. The sphingosine N-acyltransferase-like protein ALT7 seems not to act as a resistance/self-tolerance factor against the toxin in the toxin biosynthetic gene cluster, contrary to what is expected. This is Dioxygenase ALT11 from Alternaria alternata (Alternaria rot fungus).